The following is a 130-amino-acid chain: Fluoride-specific ion channel FluC 2 (130 aa).

The next 4 helical transmembrane spans lie at 4–24 (GLSTYKSFFLVAFGAVPGAIC), 38–58 (NLWGILLVNSSACLLLGFFLA), 72–92 (LYLLLCVGFLGSFSTFSSLIL), and 103–123 (WMELFLFTFTSIGLGIIFISL). Na(+) contacts are provided by glycine 82 and serine 85.

This sequence belongs to the fluoride channel Fluc/FEX (TC 1.A.43) family.

The protein localises to the cell inner membrane. The catalysed reaction is fluoride(in) = fluoride(out). With respect to regulation, na(+) is not transported, but it plays an essential structural role and its presence is essential for fluoride channel function. Its function is as follows. Fluoride-specific ion channel. Important for reducing fluoride concentration in the cell, thus reducing its toxicity. This chain is Fluoride-specific ion channel FluC 2, found in Prochlorococcus marinus (strain SARG / CCMP1375 / SS120).